Here is a 252-residue protein sequence, read N- to C-terminus: ATP synthase subunit a (252 aa).

Transmembrane regions (helical) follow at residues 29-49, 87-107, 117-137, 146-166, 196-216, and 219-239; these read FTNV…FLFI, FFPL…IGLF, IMIT…CGFY, LFVP…IEVI, FIVS…LPLI, and VAIT…FTVL.

Belongs to the ATPase A chain family. As to quaternary structure, F-type ATPases have 2 components, CF(1) - the catalytic core - and CF(0) - the membrane proton channel. CF(1) has five subunits: alpha(3), beta(3), gamma(1), delta(1), epsilon(1). CF(0) has three main subunits: a(1), b(2) and c(9-12). The alpha and beta chains form an alternating ring which encloses part of the gamma chain. CF(1) is attached to CF(0) by a central stalk formed by the gamma and epsilon chains, while a peripheral stalk is formed by the delta and b chains.

It is found in the cell inner membrane. Key component of the proton channel; it plays a direct role in the translocation of protons across the membrane. The polypeptide is ATP synthase subunit a (Bartonella bacilliformis (strain ATCC 35685 / KC583 / Herrer 020/F12,63)).